The primary structure comprises 425 residues: Serine hydroxymethyltransferase (425 aa).

(6S)-5,6,7,8-tetrahydrofolate is bound by residues leucine 128 and 132–134 (GHL). Lysine 237 carries the post-translational modification N6-(pyridoxal phosphate)lysine.

It belongs to the SHMT family. As to quaternary structure, homodimer. It depends on pyridoxal 5'-phosphate as a cofactor.

It localises to the cytoplasm. The catalysed reaction is (6R)-5,10-methylene-5,6,7,8-tetrahydrofolate + glycine + H2O = (6S)-5,6,7,8-tetrahydrofolate + L-serine. The protein operates within one-carbon metabolism; tetrahydrofolate interconversion. It functions in the pathway amino-acid biosynthesis; glycine biosynthesis; glycine from L-serine: step 1/1. In terms of biological role, catalyzes the reversible interconversion of serine and glycine with tetrahydrofolate (THF) serving as the one-carbon carrier. This reaction serves as the major source of one-carbon groups required for the biosynthesis of purines, thymidylate, methionine, and other important biomolecules. Also exhibits THF-independent aldolase activity toward beta-hydroxyamino acids, producing glycine and aldehydes, via a retro-aldol mechanism. This is Serine hydroxymethyltransferase from Wolbachia pipientis subsp. Culex pipiens (strain wPip).